Consider the following 514-residue polypeptide: Putative binding protein HI_0213 (514 aa).

An N-terminal signal peptide occupies residues 1 to 23; it reads MNNLFALCQRSAVIFSIIFTVVA. Cysteine 24 is lipidated: N-palmitoyl cysteine. Cysteine 24 carries S-diacylglycerol cysteine lipidation.

It belongs to the bacterial solute-binding protein 5 family.

The protein resides in the cell membrane. Its function is as follows. Part of a binding-protein-dependent transport system. The polypeptide is Putative binding protein HI_0213 (Haemophilus influenzae (strain ATCC 51907 / DSM 11121 / KW20 / Rd)).